The sequence spans 124 residues: Fluoride-specific ion channel FluC 1 (124 aa).

A run of 4 helical transmembrane segments spans residues 7 to 27, 35 to 55, 63 to 83, and 101 to 121; these read ALTL…GGWV, FPWG…LLQG, LLLV…TLML, and IVGT…AGAW.

The protein belongs to the fluoride channel Fluc/FEX (TC 1.A.43) family.

It localises to the cell membrane. It carries out the reaction fluoride(in) = fluoride(out). In terms of biological role, fluoride-specific ion channel. Important for reducing fluoride concentration in the cell, thus reducing its toxicity. In Rubrobacter xylanophilus (strain DSM 9941 / JCM 11954 / NBRC 16129 / PRD-1), this protein is Fluoride-specific ion channel FluC 1.